Reading from the N-terminus, the 704-residue chain is Glycine--tRNA ligase beta subunit (704 aa).

The protein belongs to the class-II aminoacyl-tRNA synthetase family. As to quaternary structure, tetramer of two alpha and two beta subunits.

It localises to the cytoplasm. It carries out the reaction tRNA(Gly) + glycine + ATP = glycyl-tRNA(Gly) + AMP + diphosphate. This is Glycine--tRNA ligase beta subunit from Rhizobium etli (strain ATCC 51251 / DSM 11541 / JCM 21823 / NBRC 15573 / CFN 42).